Reading from the N-terminus, the 246-residue chain is tRNA pseudouridine synthase A (246 aa).

The Nucleophile role is filled by D52. Y111 is a binding site for substrate.

Belongs to the tRNA pseudouridine synthase TruA family. As to quaternary structure, homodimer.

The catalysed reaction is uridine(38/39/40) in tRNA = pseudouridine(38/39/40) in tRNA. Its function is as follows. Formation of pseudouridine at positions 38, 39 and 40 in the anticodon stem and loop of transfer RNAs. This chain is tRNA pseudouridine synthase A, found in Ehrlichia ruminantium (strain Welgevonden).